We begin with the raw amino-acid sequence, 257 residues long: NAD-capped RNA hydrolase NudC (257 aa).

Substrate is bound at residue arginine 69. Residues cysteine 98 and cysteine 101 each coordinate Zn(2+). Glutamate 111 is a substrate binding site. Zn(2+)-binding residues include cysteine 116 and cysteine 119. Tyrosine 124 is a binding site for substrate. The 124-residue stretch at proline 125–threonine 248 folds into the Nudix hydrolase domain. A divalent metal cation is bound by residues alanine 158, glutamate 174, and glutamate 178. Positions glycine 159 to glycine 180 match the Nudix box motif. Residue glutamine 192–serine 199 coordinates substrate. Glutamate 219 serves as a coordination point for a divalent metal cation. Residue alanine 241 coordinates substrate.

This sequence belongs to the Nudix hydrolase family. NudC subfamily. As to quaternary structure, homodimer. It depends on Mg(2+) as a cofactor. The cofactor is Mn(2+). Zn(2+) is required as a cofactor.

It catalyses the reaction a 5'-end NAD(+)-phospho-ribonucleoside in mRNA + H2O = a 5'-end phospho-adenosine-phospho-ribonucleoside in mRNA + beta-nicotinamide D-ribonucleotide + 2 H(+). The enzyme catalyses NAD(+) + H2O = beta-nicotinamide D-ribonucleotide + AMP + 2 H(+). It carries out the reaction NADH + H2O = reduced beta-nicotinamide D-ribonucleotide + AMP + 2 H(+). In terms of biological role, mRNA decapping enzyme that specifically removes the nicotinamide adenine dinucleotide (NAD) cap from a subset of mRNAs by hydrolyzing the diphosphate linkage to produce nicotinamide mononucleotide (NMN) and 5' monophosphate mRNA. The NAD-cap is present at the 5'-end of some mRNAs and stabilizes RNA against 5'-processing. Has preference for mRNAs with a 5'-end purine. Catalyzes the hydrolysis of a broad range of dinucleotide pyrophosphates. The chain is NAD-capped RNA hydrolase NudC from Salmonella agona (strain SL483).